Reading from the N-terminus, the 93-residue chain is Small ribosomal subunit protein uS19 (93 aa).

Belongs to the universal ribosomal protein uS19 family.

Functionally, protein S19 forms a complex with S13 that binds strongly to the 16S ribosomal RNA. The polypeptide is Small ribosomal subunit protein uS19 (Brevibacillus brevis (strain 47 / JCM 6285 / NBRC 100599)).